The following is a 621-amino-acid chain: 1-deoxy-D-xylulose-5-phosphate synthase (621 aa).

Thiamine diphosphate contacts are provided by residues histidine 80 and 121–123 (GHS). Aspartate 152 is a Mg(2+) binding site. Residues 153–154 (GA), asparagine 181, tyrosine 288, and glutamate 370 each bind thiamine diphosphate. Asparagine 181 contacts Mg(2+).

The protein belongs to the transketolase family. DXPS subfamily. Homodimer. Mg(2+) serves as cofactor. It depends on thiamine diphosphate as a cofactor.

The catalysed reaction is D-glyceraldehyde 3-phosphate + pyruvate + H(+) = 1-deoxy-D-xylulose 5-phosphate + CO2. It functions in the pathway metabolic intermediate biosynthesis; 1-deoxy-D-xylulose 5-phosphate biosynthesis; 1-deoxy-D-xylulose 5-phosphate from D-glyceraldehyde 3-phosphate and pyruvate: step 1/1. Catalyzes the acyloin condensation reaction between C atoms 2 and 3 of pyruvate and glyceraldehyde 3-phosphate to yield 1-deoxy-D-xylulose-5-phosphate (DXP). The sequence is that of 1-deoxy-D-xylulose-5-phosphate synthase from Shewanella woodyi (strain ATCC 51908 / MS32).